We begin with the raw amino-acid sequence, 292 residues long: Secreted frizzled-related protein 2 (292 aa).

The first 20 residues, 1 to 20 (MPRRLCALLLLASQCLGSTA), serve as a signal peptide directing secretion. In terms of domain architecture, FZ spans 32 to 152 (YKRSNCKPIP…PKDNDLCIPL (121 aa)). Cystine bridges form between C37/C100, C47/C93, C84/C122, C111/C149, C115/C139, C169/C242, and C187/C292. One can recognise an NTR domain in the interval 169 to 292 (CDACKNKNED…FSRSIRKLQC (124 aa)).

The protein belongs to the secreted frizzled-related protein (sFRP) family.

It localises to the secreted. Functionally, soluble frizzled-related proteins (sFRPS) function as modulators of Wnt signaling through direct interaction with Wnts. They have a role in regulating cell growth and differentiation in specific cell types. SFRP2 appears to be associated with myogenesis. The chain is Secreted frizzled-related protein 2 (SFRP2) from Gallus gallus (Chicken).